We begin with the raw amino-acid sequence, 280 residues long: Probable endonuclease 4 (280 aa).

Residues His-69, His-109, Glu-145, Asp-179, His-182, His-216, Asp-229, His-231, and Glu-261 each coordinate Zn(2+).

The protein belongs to the AP endonuclease 2 family. It depends on Zn(2+) as a cofactor.

It catalyses the reaction Endonucleolytic cleavage to 5'-phosphooligonucleotide end-products.. Endonuclease IV plays a role in DNA repair. It cleaves phosphodiester bonds at apurinic or apyrimidinic (AP) sites, generating a 3'-hydroxyl group and a 5'-terminal sugar phosphate. This is Probable endonuclease 4 from Actinobacillus pleuropneumoniae serotype 7 (strain AP76).